The primary structure comprises 326 residues: Probable cell division protein WhiA (326 aa).

Residues 275 to 308 constitute a DNA-binding region (H-T-H motif); sequence SLDELGRLADPPMTKDAIAGRIRRLLAMADKRAL.

It belongs to the WhiA family.

Functionally, involved in cell division and chromosome segregation. The protein is Probable cell division protein WhiA of Paenarthrobacter aurescens (strain TC1).